Reading from the N-terminus, the 264-residue chain is tRNA1(Val) (adenine(37)-N6)-methyltransferase (264 aa).

This sequence belongs to the methyltransferase superfamily. tRNA (adenine-N(6)-)-methyltransferase family.

The protein resides in the cytoplasm. The enzyme catalyses adenosine(37) in tRNA1(Val) + S-adenosyl-L-methionine = N(6)-methyladenosine(37) in tRNA1(Val) + S-adenosyl-L-homocysteine + H(+). In terms of biological role, specifically methylates the adenine in position 37 of tRNA(1)(Val) (anticodon cmo5UAC). This Shewanella pealeana (strain ATCC 700345 / ANG-SQ1) protein is tRNA1(Val) (adenine(37)-N6)-methyltransferase.